Here is a 309-residue protein sequence, read N- to C-terminus: Intron-encoded DNA endonuclease ai2a (309 aa).

The protein belongs to the LAGLIDADG endonuclease family.

The protein resides in the mitochondrion. Its function is as follows. Mitochondrial DNA endonuclease involved in intron homing. Cleaves only one strand of intronless DNA sequence at the site which coincides with the I-SceII cleavage recognition site. In Dictyostelium discoideum (Social amoeba), this protein is Intron-encoded DNA endonuclease ai2a (ai2a).